Consider the following 161-residue polypeptide: Glycine-rich RNA-binding protein blt801 (161 aa).

In terms of domain architecture, RRM spans 6–84; that stretch reads YRCFVGGLRW…RNITVNEAQS (79 aa). The disordered stretch occupies residues 72–161; that stretch reads LDGRNITVNE…GGSGGGNWRE (90 aa). The residue at position 87 (serine 87) is a Phosphoserine; by PKA. The segment covering 89 to 161 has biased composition (gly residues); sequence GGGGFGGGGG…GGSGGGNWRE (73 aa).

Binds single-stranded DNA and homoribopolymers of guanine, uracil and adenine, but not cytosine. Also binds RNA, with a preference for RNA containing a high proportion of adenine within an open loop structure. Possibly has a role in RNA transcription or processing during stress. This Hordeum vulgare (Barley) protein is Glycine-rich RNA-binding protein blt801.